Consider the following 92-residue polypeptide: Large ribosomal subunit protein bL25 (92 aa).

It belongs to the bacterial ribosomal protein bL25 family. As to quaternary structure, part of the 50S ribosomal subunit; part of the 5S rRNA/L5/L18/L25 subcomplex. Contacts the 5S rRNA. Binds to the 5S rRNA independently of L5 and L18.

Its function is as follows. This is one of the proteins that binds to the 5S RNA in the ribosome where it forms part of the central protuberance. In Vibrio cholerae serotype O1 (strain ATCC 39541 / Classical Ogawa 395 / O395), this protein is Large ribosomal subunit protein bL25.